The primary structure comprises 75 residues: MEKLTILLHVAAVLMSTQALIQEQRQKAKINLFSKRKPSAERWWGDNGCSLWGSCTVDAECCLGNCGGMYCSLLR.

Residues 1-19 (MEKLTILLHVAAVLMSTQA) form the signal peptide. The propeptide occupies 20–41 (LIQEQRQKAKINLFSKRKPSAE). Disulfide bonds link Cys49–Cys62, Cys55–Cys66, and Cys61–Cys71.

The protein belongs to the conotoxin O2 superfamily. In terms of tissue distribution, expressed by the venom duct.

The protein localises to the secreted. In terms of biological role, inhibits voltage-gated ion channels. This is Conotoxin Vc6.15 from Conus victoriae (Queen Victoria cone).